The primary structure comprises 30 residues: Cyclotide hyen-H (30 aa).

The cyclopeptide (Lys-Asp) cross-link spans 1–30; that stretch reads KIPCGESCVYIPCISSVLGCSCSNKVCYKD. Disulfide bonds link cysteine 4–cysteine 20, cysteine 8–cysteine 22, and cysteine 13–cysteine 27.

In terms of processing, this is a cyclic peptide. In terms of tissue distribution, detected in stems (at protein level).

Its function is as follows. Probably participates in a plant defense mechanism. The protein is Cyclotide hyen-H of Pigea enneasperma (Spade flower).